The primary structure comprises 938 residues: ATP-dependent RNA helicase DDX42 (938 aa).

A compositionally biased stretch (gly residues) spans 1–18; that stretch reads MNWNKGGPGTKRGFGFGG. A disordered region spans residues 1 to 114; the sequence is MNWNKGGPGT…KPVDSDSDDD (114 aa). N6-acetyllysine is present on K5. R12 carries the post-translational modification Omega-N-methylarginine. Residues 35-52 show a composition bias toward low complexity; sequence SHSAFGATSSSSGFGKSA. The residue at position 58 (S58) is a Phosphoserine. Residues 70–84 are compositionally biased toward acidic residues; the sequence is DEENAYFEDEEEDSS. Residues S96, S104, S109, and S111 each carry the phosphoserine modification. The stretch at 116 to 157 forms a coiled coil; it reads LEAFMAEVEDQAARDMKRLEEKDKERKNVKGIRDDIEEEDDQ. The tract at residues 182–203 is disordered; it reads EYDSDGNPIAPTKKIIDPLPPI. S185 carries the post-translational modification Phosphoserine. Residues 253-281 carry the Q motif motif; sequence SSFAHFGFDEQLMHQIRKSEYTQPTPIQC. The Helicase ATP-binding domain occupies 284–459; the sequence is VPVALSGRDM…RDILIDPIRV (176 aa). 297-304 contributes to the ATP binding site; it reads AKTGSGKT. Positions 407–410 match the DEAD box motif; the sequence is DEAD. A Helicase C-terminal domain is found at 487–632; the sequence is WLTRRLVEFT…HVSKELLDLA (146 aa). 2 stretches are compositionally biased toward polar residues: residues 737–757 and 786–798; these read LNSV…SPVT and GVNN…NSRE. The interval 737 to 938 is disordered; that stretch reads LNSVPTNSAQ…PKRKKSRWDS (202 aa). The interval 738–833 is necessary for interaction with TP53BP2; the sequence is NSVPTNSAQQ…TGNRHSDSPR (96 aa). At S754 the chain carries Phosphoserine. The span at 820 to 920 shows a compositional bias: basic and acidic residues; that stretch reads SHGETGNRHS…KVDSKTDKTA (101 aa). K899 participates in a covalent cross-link: Glycyl lysine isopeptide (Lys-Gly) (interchain with G-Cter in SUMO2).

Belongs to the DEAD box helicase family. DDX42 subfamily. In terms of assembly, transient component of the SF3B subcomplex of the 17S U2 SnRNP complex. Interacts (via the C-terminus) with TP53BP2; the interaction is not inhibitied by TP53BP2 ubiquitination and is independent of p53/TP53. As to expression, expressed in several cell lines (at protein level). Expressed in liver, lung, tonsil, thymus, muscle and pancreatic islets.

It localises to the cytoplasm. It is found in the nucleus. Its subcellular location is the cajal body. The protein resides in the nucleus speckle. The catalysed reaction is ATP + H2O = ADP + phosphate + H(+). Functionally, ATP-dependent RNA helicase that binds to partially double-stranded RNAs (dsRNAs) in order to unwind RNA secondary structures. Unwinding is promoted in the presence of single-strand binding proteins. Also mediates RNA duplex formation thereby displacing the single-strand RNA binding protein. ATP and ADP modulate its activity: ATP binding and hydrolysis by DDX42 triggers RNA strand separation, whereas the ADP-bound form of the protein triggers annealing of complementary RNA strands. Required for assembly of the 17S U2 SnRNP complex of the spliceosome, a large ribonucleoprotein complex that removes introns from transcribed pre-mRNAs: DDX42 associates transiently with the SF3B subcomplex of the 17S U2 SnRNP complex and is released after fulfilling its role in the assembly of 17S U2 SnRNP. Involved in the survival of cells by interacting with TP53BP2 and thereby counteracting the apoptosis-stimulating activity of TP53BP2. Relocalizes TP53BP2 to the cytoplasm. This Homo sapiens (Human) protein is ATP-dependent RNA helicase DDX42.